The sequence spans 208 residues: Glutathione S-transferase GstB (208 aa).

In terms of domain architecture, GST N-terminal spans 1 to 83; that stretch reads MITLWGRNNS…YLAAQYGQKR (83 aa). Glutathione contacts are provided by residues asparagine 12, asparagine 39, valine 53, and 67 to 68; that span reads ES. The region spanning 88-208 is the GST C-terminal domain; the sequence is SPARRAEAEK…VRKVVMIPVS (121 aa).

The protein belongs to the GST superfamily.

The catalysed reaction is RX + glutathione = an S-substituted glutathione + a halide anion + H(+). Functionally, conjugation of reduced glutathione to a wide number of exogenous and endogenous hydrophobic electrophiles. In Escherichia coli O6:H1 (strain CFT073 / ATCC 700928 / UPEC), this protein is Glutathione S-transferase GstB (gstB).